Here is a 160-residue protein sequence, read N- to C-terminus: Cytochrome b6-f complex subunit 4 (160 aa).

A run of 3 helical transmembrane segments spans residues 36-56, 95-115, and 131-151; these read LLYI…GLAV, LLGV…PFLE, and TVFL…TLPI.

This sequence belongs to the cytochrome b family. PetD subfamily. The 4 large subunits of the cytochrome b6-f complex are cytochrome b6, subunit IV (17 kDa polypeptide, petD), cytochrome f and the Rieske protein, while the 4 small subunits are petG, petL, petM and petN. The complex functions as a dimer.

Its subcellular location is the plastid. The protein localises to the chloroplast thylakoid membrane. Component of the cytochrome b6-f complex, which mediates electron transfer between photosystem II (PSII) and photosystem I (PSI), cyclic electron flow around PSI, and state transitions. The polypeptide is Cytochrome b6-f complex subunit 4 (Spinacia oleracea (Spinach)).